The chain runs to 743 residues: Cap-specific mRNA (nucleoside-2'-O-)-methyltransferase 2 (743 aa).

Residues 113–326 enclose the Adrift-type SAM-dependent 2'-O-MTase domain; that stretch reads ELCTQAWAKF…LYIVCLDYQA (214 aa). Lys-121 is an active-site residue. Residues Gly-152, Trp-171, and Asp-239 each coordinate S-adenosyl-L-methionine. Asp-239 is a catalytic residue. Lys-279 (proton acceptor) is an active-site residue.

The protein localises to the nucleus. It is found in the cytoplasm. The catalysed reaction is a 5'-end (N(7)-methyl 5'-triphosphoguanosine)-(2'-O-methyl-ribonucleoside)-(ribonucleotide) in mRNA + S-adenosyl-L-methionine = a 5'-end (N(7)-methyl 5'-triphosphoguanosine)-(2'-O-methyl-ribonucleoside)-(2'-O-methyl-ribonucleotide) in mRNA + S-adenosyl-L-homocysteine + H(+). Functionally, S-adenosyl-L-methionine-dependent methyltransferase that mediates mRNA cap2 2'-O-ribose methylation to the 5'-cap structure of mRNAs. Methylates the ribose of the second nucleotide of a m(7)GpppG-capped mRNA and small nuclear RNA (snRNA) (cap0) to produce m(7)GpppRmpNm (cap2). This Danio rerio (Zebrafish) protein is Cap-specific mRNA (nucleoside-2'-O-)-methyltransferase 2 (cmtr2).